The primary structure comprises 305 residues: Probable pyridoxal 5'-phosphate synthase subunit pdx1 (305 aa).

Position 33 (D33) interacts with D-ribose 5-phosphate. K90 acts as the Schiff-base intermediate with D-ribose 5-phosphate in catalysis. Position 162 (G162) interacts with D-ribose 5-phosphate. D-glyceraldehyde 3-phosphate is bound at residue R174. Residues G223 and 244 to 245 (GS) each bind D-ribose 5-phosphate.

The protein belongs to the PdxS/SNZ family. As to quaternary structure, homohexamer.

It catalyses the reaction aldehydo-D-ribose 5-phosphate + D-glyceraldehyde 3-phosphate + L-glutamine = pyridoxal 5'-phosphate + L-glutamate + phosphate + 3 H2O + H(+). It participates in cofactor biosynthesis; pyridoxal 5'-phosphate biosynthesis. In terms of biological role, catalyzes the formation of pyridoxal 5'-phosphate from ribose 5-phosphate (RBP), glyceraldehyde 3-phosphate (G3P) and ammonia. The ammonia is provided by pdx2. Can also use ribulose 5-phosphate and dihydroxyacetone phosphate as substrates, resulting from enzyme-catalyzed isomerization of RBP and G3P, respectively. The polypeptide is Probable pyridoxal 5'-phosphate synthase subunit pdx1 (pdx1) (Dictyostelium discoideum (Social amoeba)).